The chain runs to 271 residues: Putative carboxymethylenebutenolidase (271 aa).

Active-site residues include cysteine 147, aspartate 204, and histidine 236.

It belongs to the dienelactone hydrolase family.

The enzyme catalyses 2-(5-oxo-2,5-dihydrofuran-2-ylidene)acetate + H2O = 4-oxohex-2-enedioate + H(+). In Escherichia coli O157:H7, this protein is Putative carboxymethylenebutenolidase (ysgA).